Reading from the N-terminus, the 510-residue chain is GMP synthase [glutamine-hydrolyzing] (510 aa).

The region spanning 5 to 195 (LVIVVDFGGQ…LFDICNLKGD (191 aa)) is the Glutamine amidotransferase type-1 domain. Residue Cys82 is the Nucleophile of the active site. Residues His169 and Glu171 contribute to the active site. The GMPS ATP-PPase domain occupies 196–385 (WSMSSFVDEK…LGIPHKLVWR (190 aa)). 223–229 (SGGVDSS) provides a ligand contact to ATP.

As to quaternary structure, homodimer.

It carries out the reaction XMP + L-glutamine + ATP + H2O = GMP + L-glutamate + AMP + diphosphate + 2 H(+). The protein operates within purine metabolism; GMP biosynthesis; GMP from XMP (L-Gln route): step 1/1. Functionally, catalyzes the synthesis of GMP from XMP. The polypeptide is GMP synthase [glutamine-hydrolyzing] (Clostridium kluyveri (strain NBRC 12016)).